Reading from the N-terminus, the 465-residue chain is Cysteine--tRNA ligase (465 aa).

Zn(2+) is bound at residue C30. The short motif at 32–42 is the 'HIGH' region element; sequence ITVYDYCHVGH. Residues C214, H239, and E243 each contribute to the Zn(2+) site. A 'KMSKS' region motif is present at residues 271 to 275; sequence KMSKS. K274 contacts ATP.

Belongs to the class-I aminoacyl-tRNA synthetase family. As to quaternary structure, monomer. The cofactor is Zn(2+).

Its subcellular location is the cytoplasm. It catalyses the reaction tRNA(Cys) + L-cysteine + ATP = L-cysteinyl-tRNA(Cys) + AMP + diphosphate. This is Cysteine--tRNA ligase from Burkholderia ambifaria (strain MC40-6).